The sequence spans 660 residues: DNA ligase (660 aa).

NAD(+) contacts are provided by residues 31–35, 79–80, and Glu111; these read DKEYD and SL. Catalysis depends on Lys113, which acts as the N6-AMP-lysine intermediate. Arg134, Glu168, Lys280, and Lys304 together coordinate NAD(+). Zn(2+) is bound by residues Cys397, Cys400, Cys413, and Cys419. Positions 577 to 660 constitute a BRCT domain; the sequence is RQESIFSGKT…LDEAAFEALL (84 aa).

It belongs to the NAD-dependent DNA ligase family. LigA subfamily. Mg(2+) is required as a cofactor. The cofactor is Mn(2+).

It catalyses the reaction NAD(+) + (deoxyribonucleotide)n-3'-hydroxyl + 5'-phospho-(deoxyribonucleotide)m = (deoxyribonucleotide)n+m + AMP + beta-nicotinamide D-nucleotide.. Functionally, DNA ligase that catalyzes the formation of phosphodiester linkages between 5'-phosphoryl and 3'-hydroxyl groups in double-stranded DNA using NAD as a coenzyme and as the energy source for the reaction. It is essential for DNA replication and repair of damaged DNA. The protein is DNA ligase of Alkaliphilus metalliredigens (strain QYMF).